The chain runs to 1359 residues: MSYSFAEKKRIRKSFAKRTSILPFPFLLATQIESYADFLQADVAPGKRKNQGLQAAFNAVFPIESHSNNARLDFISYMLGTSVFDVKECQQRGLTYASPLRARVRLTIMDKEASKPTVKEVKEQEVYMGEIPLMTETGSFVVNGTERVIVSQLHRSPGVFFEHDRGKTHSSGKLLFSARIIPYRGSWLDFEFDPKDYVYFRIDRRRKMPVTTLLKAMGYSSTQILADFFEFDHFTLAGNKILFHLIPERLRGELASFDIVSEDGKVFVQKDKRITAKHVRDLQQANLTKISVPEEFLLGKILAEDIVDKETGEVVATANSEINETLLERIKQTQNKNSEISTLFVNDLNYGPYISQTLRVDESTDQMSAQVAIYRMMRPGEPPTEDAVLALFNGLFYSPERYDLSVVGRMKFNRRVGREELTGSTTLSNEDITDVIKILVGLRNGRGEIDDIDHLGNRRVRSVGELAENQFRAGLARVEKAVKERLSQAESENLMPHDFINAKPVSSAIREFFGSSQLSQFMDQTNPLSEITHKRRISALGPGGLTRERAGFEVRDVHPTHYGRVCPIETPEGPNIGLINSLALYARTNEYGFIETPYRMVKNSRVTEEVVYLSAIEESQYVIAQANANFDQTGVFTDEVVSCRHKNEFTLASRDQIEYVDIAPAQIVSVAASLIPFLEHDDANRALMGSNMQRQAVPCLRAEKPLVGTGIERVVAVHSGTAVKALRGGVVDYVDAGRIVIRVHDAETRAGEVGVDIYNLTKYIRSNQNTNINQRPIVKIGDILSREDVIADGASTDLGELALGQNMLIAFMPWNGLNFEDSILISERVVSDDRFTSIHIEELTAVSRDTKLGTEEVTADIPNLSERQRARLDESGIVYIGAEVEAGDVLVGKVTPKSETQLTPEEKLLRAIFGEKASDVKDTSLHVPAGISGTVIDVQIFTREGVDRDKRSKQIIADELGRFKKDLADQMRIVEADAFQRAKRLLAGKVAAGGPKKLAKNSTITQEYLESVEKHHWFDIRLIDENTSLQLEQIKDSLVQKRKLFDLAFEEKQRKLSQGDELPPGVQKMVKVYIAVKRRLQSGDKMAGRHGNKGVISKIVPVEDMPYMADGTPVDVVLNPLGVPSRMNIGQVLEVHLGWAAKGLGKKINEMLISQRDASEIRDFLSKIYSDNGKQEDLVSLDDKEILELAKNLSDGVPFATPVFDGAHESEIKHMLKLADLPESGQTTLYDGRTGEAFDRLVTVGYMHVLKLHHLVDDKMHARSTGPYSLVTQQPLGGKAQFGGQRFGEMEVWALEAYGAAYTLQEMLTVKSDDVNGRTKVYESIVKGDHKIDAGMPESFNVLVKEIRSLGLDIDLEQH.

The protein belongs to the RNA polymerase beta chain family. The RNAP catalytic core consists of 2 alpha, 1 beta, 1 beta' and 1 omega subunit. When a sigma factor is associated with the core the holoenzyme is formed, which can initiate transcription.

It catalyses the reaction RNA(n) + a ribonucleoside 5'-triphosphate = RNA(n+1) + diphosphate. DNA-dependent RNA polymerase catalyzes the transcription of DNA into RNA using the four ribonucleoside triphosphates as substrates. This is DNA-directed RNA polymerase subunit beta from Nitrosomonas eutropha (strain DSM 101675 / C91 / Nm57).